Reading from the N-terminus, the 490-residue chain is Transcriptional regulator FleQ (490 aa).

L142 contacts 3',3'-c-di-GMP. Residues V147 and 177–182 contribute to the ADP site; that span reads GTGKEV. 3',3'-c-di-GMP contacts are provided by residues 186–189 and 330–341; these read NLHY and ELISRMEHEKRG. ADP contacts are provided by R334 and R363.

Forms homodimers. Forms homohexamers that inhibit transcription initiation. Interacts with FleN; this complex is formed in the presence as well as in the absence of c-di-GMP or ATP.

Its activity is regulated as follows. C-di-GMP interaction leads to active site obstruction, hexameric ring destabilization thus relieving DNA bending and activating gene transcription. AAA+ ATPase enhancer-binding protein that acts as a transcription regulator and plays a role in the modulation of mucin adhesion and flagellar gene expression. In addition to flagella genes, also regulates expression of biofilm-related genes. Functions as a transcriptional repressor in the absence of c-di-GMP and as an activator when c-di-GMP is present. The protein is Transcriptional regulator FleQ of Pseudomonas aeruginosa (strain ATCC 15692 / DSM 22644 / CIP 104116 / JCM 14847 / LMG 12228 / 1C / PRS 101 / PAO1).